Here is a 306-residue protein sequence, read N- to C-terminus: RNA pseudouridylate synthase domain-containing protein 1 (306 aa).

An N-acetylmethionine modification is found at methionine 1. Aspartate 67 is an active-site residue. A disordered region spans residues 255 to 290 (RTDPDPDPMSGGPRPCSPSTPQPRPGRPPPETEAQR). The segment covering 269–285 (PCSPSTPQPRPGRPPPE) has biased composition (pro residues).

This sequence belongs to the pseudouridine synthase RluA family.

In Mus musculus (Mouse), this protein is RNA pseudouridylate synthase domain-containing protein 1 (Rpusd1).